We begin with the raw amino-acid sequence, 101 residues long: Urease subunit beta (101 aa).

The protein belongs to the urease beta subunit family. In terms of assembly, heterotrimer of UreA (gamma), UreB (beta) and UreC (alpha) subunits. Three heterotrimers associate to form the active enzyme.

It localises to the cytoplasm. The catalysed reaction is urea + 2 H2O + H(+) = hydrogencarbonate + 2 NH4(+). The protein operates within nitrogen metabolism; urea degradation; CO(2) and NH(3) from urea (urease route): step 1/1. This Rhizobium leguminosarum bv. trifolii (strain WSM2304) protein is Urease subunit beta.